A 423-amino-acid polypeptide reads, in one-letter code: Imidazolonepropionase (423 aa).

Residues H78 and H80 each coordinate Fe(3+). Residues H78 and H80 each contribute to the Zn(2+) site. Positions 87, 150, and 183 each coordinate 4-imidazolone-5-propanoate. N-formimidoyl-L-glutamate is bound at residue Y150. Residue H247 participates in Fe(3+) binding. H247 provides a ligand contact to Zn(2+). E250 is a binding site for 4-imidazolone-5-propanoate. D322 is a Fe(3+) binding site. Zn(2+) is bound at residue D322. N-formimidoyl-L-glutamate is bound by residues N324 and G326. S327 contacts 4-imidazolone-5-propanoate.

The protein belongs to the metallo-dependent hydrolases superfamily. HutI family. The cofactor is Zn(2+). Fe(3+) is required as a cofactor.

It localises to the cytoplasm. The enzyme catalyses 4-imidazolone-5-propanoate + H2O = N-formimidoyl-L-glutamate. The protein operates within amino-acid degradation; L-histidine degradation into L-glutamate; N-formimidoyl-L-glutamate from L-histidine: step 3/3. Its function is as follows. Catalyzes the hydrolytic cleavage of the carbon-nitrogen bond in imidazolone-5-propanoate to yield N-formimidoyl-L-glutamate. It is the third step in the universal histidine degradation pathway. In Bacillus thuringiensis (strain Al Hakam), this protein is Imidazolonepropionase.